A 512-amino-acid chain; its full sequence is Circadian clock oscillator protein KaiC (512 aa).

KaiC domains are found at residues 1-243 (MQFP…ISIF) and 257-512 (VRVS…SSED). ATP-binding residues include G45, T46, G47, K48, T49, S85, K220, L221, R222, T224, H226, T286, G287, T288, G289, K290, T291, and L292. T49 serves as a coordination point for Mg(2+). T291 serves as a coordination point for Mg(2+). Residue E314 participates in Mg(2+) binding. ATP is bound at residue W327. S427 is modified (phosphoserine; by autocatalysis). Phosphothreonine; by autocatalysis is present on T428. ATP contacts are provided by R447, K453, M454, R455, S457, H459, and K461.

The protein belongs to the KaiC family. In terms of assembly, homohexamer; hexamerization is dependent on ATP-binding. The KaiABC complex composition changes during the circadian cycle to control KaiC phosphorylation. Complexes KaiC(6), KaiA(2-4):KaiC(6), KaiB(6):KaiC(6) and KaiC(6):KaiB(6):KaiA(12) are among the most important forms, many form cooperatively. KaiC interacts with SasA, activating its autokinase function and leading to RpaA activation. Mg(2+) is required as a cofactor. Phosphorylated on serine and threonine residues by autocatalysis. Has a 4 step phosphorylation cycle; the autokinase acts first on Thr-428, then Ser-427. When Ser-427 is modified KaiC switches to an autophosphatase mode, acting first on phospho-Thr-428 then phospho-Ser-427.

It catalyses the reaction L-seryl-[protein] + ATP = O-phospho-L-seryl-[protein] + ADP + H(+). The enzyme catalyses L-threonyl-[protein] + ATP = O-phospho-L-threonyl-[protein] + ADP + H(+). It carries out the reaction ATP + H2O = ADP + phosphate + H(+). Its activity is regulated as follows. The interaction with KaiA enhances its phosphorylation status, while the interaction with KaiB decreases it. Its function is as follows. Central component of the KaiABC oscillator complex, which constitutes the main circadian regulator in cyanobacteria. Complex composition changes during the circadian cycle to control KaiC phosphorylation. KaiA stimulates KaiC autophosphorylation, while KaiB sequesters KaiA, leading to KaiC autodephosphorylation. Clock output pathways impact the RpaA transcriptional regulator. KaiC enhances the autophosphorylation activity of SasA, which then transfers its phosphate group to RpaA to activate it. KaiB and KaiC together enhance the phospho-RpaA dephosphatase activity of CikA. In terms of biological role, has a weak, temperature-independent ATPase activity; ATPase activity defines the circadian period. The phosphorylation state of KaiC modulates its ATPase activity and effects KaiB binding. The sequence is that of Circadian clock oscillator protein KaiC from Parasynechococcus marenigrum (strain WH8102).